We begin with the raw amino-acid sequence, 269 residues long: Eukaryotic translation initiation factor 3 subunit G-1 (269 aa).

One can recognise an RRM domain in the interval 188-266 (AAIRISNLSE…LILSVEWSKP (79 aa)). At Ser198 the chain carries Phosphoserine.

It belongs to the eIF-3 subunit G family. Component of the eukaryotic translation initiation factor 3 (eIF-3) complex. The eIF-3 complex interacts with pix.

It localises to the cytoplasm. Functionally, RNA-binding component of the eukaryotic translation initiation factor 3 (eIF-3) complex, which is involved in protein synthesis of a specialized repertoire of mRNAs and, together with other initiation factors, stimulates binding of mRNA and methionyl-tRNAi to the 40S ribosome. The eIF-3 complex specifically targets and initiates translation of a subset of mRNAs involved in cell proliferation. This subunit can bind 18S rRNA. The sequence is that of Eukaryotic translation initiation factor 3 subunit G-1 from Drosophila melanogaster (Fruit fly).